A 545-amino-acid chain; its full sequence is MSTSLNYKSFSKEQQTMDNLEKQLICPICLEMFTKPVVILPCQHNLCRKCASDIFQASNPYLPTRGGTTVASGGRFRCPSCRHEVVLDRHGVYGLQRNLLVENIIDIYKQESTRPEKKLDQPMCEEHEEERINIYCLNCEVPTCSLCKVFGAHKDCQVAPLTHVFQRQKSELSDGIAVLVGSNDRVQGVISQLEDTCKTIEECCRKQKQDLCEKFDHLYGILEERKTEMTQAITRTQEEKLEHVRTLIRKYSDHLENVSKLVESGIQFMDEPEMAVFLQNAKTLLQKIVEASKAFQMEKLEQGYEIMSNFTVNLNREEKIIREIDFSREEEEEEDAGEIDEEGEGEDAVEVEEAENVQIASSGEEESLEKAAEPSQLPAELQVAPEPLPASSPEPFSSMPPAADVLVTQGEVVPIGSQQTTQSETSGPSAAETADPLFYPSWYKGQSRKTSSNPPCTHGSEGLGQIGPLGIEDSSVQSAEVAEAATNEQAAVSGKESSSTAATSQIGFEAPSPQGQSAALGSGGGADPEPARHVFSFSWLNSLNE.

The segment at 26–82 adopts an RING-type zinc-finger fold; that stretch reads CPICLEMFTKPVVILPCQHNLCRKCASDIFQASNPYLPTRGGTTVASGGRFRCPSCR. The B box-type zinc-finger motif lies at 119–161; sequence LDQPMCEEHEEERINIYCLNCEVPTCSLCKVFGAHKDCQVAPL. 4 residues coordinate Zn(2+): Cys124, His127, Cys147, and His153. Residues 269 to 327 enclose the COS domain; that stretch reads MDEPEMAVFLQNAKTLLQKIVEASKAFQMEKLEQGYEIMSNFTVNLNREEKIIREIDFS. 3 disordered regions span residues 324-352, 359-378, and 417-532; these read IDFSREEEEEEDAGEIDEEGEGEDAVEVE, IASSGEEESLEKAAEPSQLP, and SQQT…EPAR. Over residues 328–352 the composition is skewed to acidic residues; sequence REEEEEEDAGEIDEEGEGEDAVEVE. Residues 417 to 428 show a composition bias toward polar residues; the sequence is SQQTTQSETSGP. Residues 474–485 show a composition bias toward low complexity; the sequence is SSVQSAEVAEAA. Residues 486-506 are compositionally biased toward polar residues; it reads TNEQAAVSGKESSSTAATSQI.

Post-translationally, targeted for degradation through the proteasomal and lysosomal pathways in the presence of SUMO3. Widely expressed in various tissues, besides skeletal muscle and heart, such as brain, lung, liver, spleen and kidney.

The protein localises to the nucleus. The protein resides in the cytoplasm. The enzyme catalyses S-ubiquitinyl-[E2 ubiquitin-conjugating enzyme]-L-cysteine + [acceptor protein]-L-lysine = [E2 ubiquitin-conjugating enzyme]-L-cysteine + N(6)-ubiquitinyl-[acceptor protein]-L-lysine.. Its function is as follows. E3 ubiquitin ligase that plays an important role in regulating cardiac development and contractility, muscle growth, metabolism, and fiber-type differentiation. Acts as a critical factor that regulates cardiomyocyte size during development in concert with TRIM63 by regulating E2F1-mediated gene expression. Plays a role in apoptosis induction in cardiomyocytes by promoting ubiquitination of the DUSP1 phosphatase. Promotes non-canonical NF-kappa-B signaling and B-cell-mediated immune responses by mediating NFKB2 'Lys-48'-linked ubiquitination and processing. In turn, NFKB2 is further processed by valosin-containing protein/VCP, an ATPase that mediates ubiquitin-dependent protein degradation by the proteasome. May play a role in preventing macrophages from producing inflammatory factors and migrating by downregulating the level of nuclear NF-kappa-B subunit RELA. Modifies also PPARG via polyubiquitination and accelerates PPARG proteasomal degradation to inhibit its activity. The sequence is that of Tripartite motif-containing 55 (Trim55) from Mus musculus (Mouse).